The sequence spans 247 residues: Adenosylcobinamide-GDP ribazoletransferase (247 aa).

A run of 6 helical transmembrane segments spans residues isoleucine 31 to isoleucine 51, leucine 55 to leucine 75, isoleucine 109 to isoleucine 129, leucine 135 to threonine 155, valine 183 to isoleucine 203, and alanine 227 to valine 247.

It belongs to the CobS family. Mg(2+) serves as cofactor.

The protein resides in the cell inner membrane. The enzyme catalyses alpha-ribazole + adenosylcob(III)inamide-GDP = adenosylcob(III)alamin + GMP + H(+). The catalysed reaction is alpha-ribazole 5'-phosphate + adenosylcob(III)inamide-GDP = adenosylcob(III)alamin 5'-phosphate + GMP + H(+). The protein operates within cofactor biosynthesis; adenosylcobalamin biosynthesis; adenosylcobalamin from cob(II)yrinate a,c-diamide: step 7/7. Its function is as follows. Joins adenosylcobinamide-GDP and alpha-ribazole to generate adenosylcobalamin (Ado-cobalamin). Also synthesizes adenosylcobalamin 5'-phosphate from adenosylcobinamide-GDP and alpha-ribazole 5'-phosphate. The polypeptide is Adenosylcobinamide-GDP ribazoletransferase (Acinetobacter baumannii (strain ACICU)).